The primary structure comprises 341 residues: KRR1 small subunit processome component homolog (341 aa).

The region spanning 126 to 194 is the KH domain; it reads DIIKIGNLVH…VRDIVLETMN (69 aa). Residues 230 to 244 are compositionally biased toward basic residues; the sequence is KNKNISKRKQPKSRK. The disordered stretch occupies residues 230-327; the sequence is KNKNISKRKQ…RPSEASKVDV (98 aa). The stretch at 271 to 341 forms a coiled coil; sequence FLNKEQKQAK…AKLLKANKQK (71 aa). Composition is skewed to basic and acidic residues over residues 272–303 and 313–327; these read LNKEQKQAKRQQERVAKQAEAAKKQDERRNKD and EQNRKRPSEASKVDV.

Belongs to the KRR1 family. As to quaternary structure, monomer. Component of the ribosomal small subunit (SSU) processome.

It localises to the nucleus. It is found in the nucleolus. Required for 40S ribosome biogenesis. Involved in nucleolar processing of pre-18S ribosomal RNA and ribosome assembly. Binds to RNA. Required for female germline development, cell viability during eye development and for survival of dividing cells and epithelial cells during early wing disk development. This Drosophila grimshawi (Hawaiian fruit fly) protein is KRR1 small subunit processome component homolog.